Consider the following 181-residue polypeptide: Protein GrpE (181 aa).

It belongs to the GrpE family. As to quaternary structure, homodimer.

The protein localises to the cytoplasm. Participates actively in the response to hyperosmotic and heat shock by preventing the aggregation of stress-denatured proteins, in association with DnaK and GrpE. It is the nucleotide exchange factor for DnaK and may function as a thermosensor. Unfolded proteins bind initially to DnaJ; upon interaction with the DnaJ-bound protein, DnaK hydrolyzes its bound ATP, resulting in the formation of a stable complex. GrpE releases ADP from DnaK; ATP binding to DnaK triggers the release of the substrate protein, thus completing the reaction cycle. Several rounds of ATP-dependent interactions between DnaJ, DnaK and GrpE are required for fully efficient folding. The protein is Protein GrpE of Delftia acidovorans (strain DSM 14801 / SPH-1).